Here is a 216-residue protein sequence, read N- to C-terminus: Uracil-DNA glycosylase (216 aa).

The Proton acceptor role is filled by aspartate 59.

This sequence belongs to the uracil-DNA glycosylase (UDG) superfamily. UNG family.

Its subcellular location is the cytoplasm. The catalysed reaction is Hydrolyzes single-stranded DNA or mismatched double-stranded DNA and polynucleotides, releasing free uracil.. Excises uracil residues from the DNA which can arise as a result of misincorporation of dUMP residues by DNA polymerase or due to deamination of cytosine. The sequence is that of Uracil-DNA glycosylase from Idiomarina loihiensis (strain ATCC BAA-735 / DSM 15497 / L2-TR).